Consider the following 280-residue polypeptide: Inner membrane ABC transporter permease protein YcjP (280 aa).

Topologically, residues 1 to 10 (MATNKRTLSR) are cytoplasmic. Residues 11–31 (IGFYCGLALFLIITLFPFFVM) form a helical membrane-spanning segment. Over 32-53 (LMTSFKGAKEAISLHPTLLPQQ) the chain is Periplasmic. Residues 54–74 (WTLEHYVDIFNPMIFPFVDYF) traverse the membrane as a helical segment. In terms of domain architecture, ABC transmembrane type-1 spans 74 to 265 (FRNSLVVSVV…LPVVIMYALS (192 aa)). The Cytoplasmic portion of the chain corresponds to 75 to 77 (RNS). The helical transmembrane segment at 78–98 (LVVSVVSSVVAVFLGILGAYA) threads the bilayer. Residues 99-117 (LSRLRFKGRMTINASFYTV) are Periplasmic-facing. The chain crosses the membrane as a helical span at residues 118 to 138 (YMFSGILLVVPLFKIITALGI). At 139–140 (YD) the chain is on the cytoplasmic side. The helical transmembrane segment at 141–161 (TEMALIITMVTQTLPTAVFML) threads the bilayer. Over 162-189 (KSYFDTIPDEIEEAAMMDGLNRLQIIFR) the chain is Periplasmic. The helical transmembrane segment at 190-210 (ITVPLAMSGLISVFVYCFMVA) threads the bilayer. Residues 211-214 (WNDY) are Cytoplasmic-facing. A helical membrane pass occupies residues 215-235 (LFASIFLSSASNFTLPVGLNA). Topologically, residues 236–242 (LFSTPDY) are periplasmic. A helical membrane pass occupies residues 243-263 (IWGRMMAASLVTALPVVIMYA). Topologically, residues 264-280 (LSERFIKSGLTAGGVKG) are cytoplasmic.

Belongs to the binding-protein-dependent transport system permease family. MalFG subfamily.

The protein resides in the cell inner membrane. Functionally, probably part of the binding-protein-dependent transport system YcjNOP. Probably responsible for the translocation of the substrate across the membrane. This chain is Inner membrane ABC transporter permease protein YcjP (ycjP), found in Escherichia coli (strain K12).